Here is a 371-residue protein sequence, read N- to C-terminus: Histidinol-phosphate aminotransferase 2 (371 aa).

Lysine 232 is modified (N6-(pyridoxal phosphate)lysine).

Belongs to the class-II pyridoxal-phosphate-dependent aminotransferase family. Histidinol-phosphate aminotransferase subfamily. Homodimer. Pyridoxal 5'-phosphate is required as a cofactor.

It carries out the reaction L-histidinol phosphate + 2-oxoglutarate = 3-(imidazol-4-yl)-2-oxopropyl phosphate + L-glutamate. Its pathway is amino-acid biosynthesis; L-histidine biosynthesis; L-histidine from 5-phospho-alpha-D-ribose 1-diphosphate: step 7/9. This chain is Histidinol-phosphate aminotransferase 2, found in Methylococcus capsulatus (strain ATCC 33009 / NCIMB 11132 / Bath).